The sequence spans 102 residues: MNPNQKIITIGSVSLGLVCLDILLHIISITITVLGLHKNGKQRRCNETVIREDNETVRIEKVTQWHNTNVIEYIEKLEGDHFMNNTEPLCHAKGFALFSKDN.

Residues 1 to 6 are Intravirion-facing; sequence MNPNQK. A helical; Signal-anchor for type II membrane protein transmembrane segment spans residues 7–35; that stretch reads IITIGSVSLGLVCLDILLHIISITITVLG. Positions 11 to 33 are involved in apical transport and lipid raft association; sequence GSVSLGLVCLDILLHIISITITV. At 36-102 the chain is on the virion surface side; sequence LHKNGKQRRC…KGFALFSKDN (67 aa). A hypervariable stalk region region spans residues 37–88; that stretch reads HKNGKQRRCNETVIREDNETVRIEKVTQWHNTNVIEYIEKLEGDHFMNNTEP. N-linked (GlcNAc...) asparagine; by host glycans are attached at residues asparagine 46, asparagine 54, and asparagine 84. The tract at residues 89–102 is head of neuraminidase; the sequence is LCHAKGFALFSKDN.

It belongs to the glycosyl hydrolase 34 family. As to quaternary structure, homotetramer. Requires Ca(2+) as cofactor. N-glycosylated.

The protein localises to the virion membrane. The protein resides in the host apical cell membrane. It catalyses the reaction Hydrolysis of alpha-(2-&gt;3)-, alpha-(2-&gt;6)-, alpha-(2-&gt;8)- glycosidic linkages of terminal sialic acid residues in oligosaccharides, glycoproteins, glycolipids, colominic acid and synthetic substrates.. Its activity is regulated as follows. Inhibited by the neuraminidase inhibitors zanamivir (Relenza) and oseltamivir (Tamiflu). These drugs interfere with the release of progeny virus from infected cells and are effective against all influenza strains. Resistance to neuraminidase inhibitors is quite rare. Functionally, catalyzes the removal of terminal sialic acid residues from viral and cellular glycoconjugates. Cleaves off the terminal sialic acids on the glycosylated HA during virus budding to facilitate virus release. Additionally helps virus spread through the circulation by further removing sialic acids from the cell surface. These cleavages prevent self-aggregation and ensure the efficient spread of the progeny virus from cell to cell. Otherwise, infection would be limited to one round of replication. Described as a receptor-destroying enzyme because it cleaves a terminal sialic acid from the cellular receptors. May facilitate viral invasion of the upper airways by cleaving the sialic acid moieties on the mucin of the airway epithelial cells. Likely to plays a role in the budding process through its association with lipid rafts during intracellular transport. May additionally display a raft-association independent effect on budding. Plays a role in the determination of host range restriction on replication and virulence. Sialidase activity in late endosome/lysosome traffic seems to enhance virus replication. The sequence is that of Neuraminidase (NA) from Influenza A virus (strain A/Black duck/Australia/702/1978 H3N8).